Consider the following 150-residue polypeptide: Ribosome maturation factor RimP (150 aa).

This sequence belongs to the RimP family.

Its subcellular location is the cytoplasm. In terms of biological role, required for maturation of 30S ribosomal subunits. In Hahella chejuensis (strain KCTC 2396), this protein is Ribosome maturation factor RimP.